The sequence spans 232 residues: MSVRILVVDDDRAVRESLRRSLSFNGYTVELAHDGVEALEMIASDRPDALVLDVMMPRLDGLEVCRQLRSTGDDLPILVLTARDSVSERVAGLDAGADDYLPKPFALEELLARMRALLRRTKLEDDEAADSVAMTFSDLSLDPVTREVTRGARRISLTRTEFALLEMLIANPRRVLTRSRILEEVWGFDFPTSGNALEVYVGYLRRKTEAEGEPRLIHTVRGVGYVLRETPP.

The region spanning 4 to 118 (RILVVDDDRA…ELLARMRALL (115 aa)) is the Response regulatory domain. Position 48 is a 4-aspartylphosphate (Asp48). The ompR/PhoB-type DNA-binding region spans 131–229 (SVAMTFSDLS…VRGVGYVLRE (99 aa)).

Phosphorylated and dephosphorylated by MprB.

It localises to the cytoplasm. Its function is as follows. Member of the two-component regulatory system MprB/MprA which contributes to maintaining a balance among several systems involved in stress resistance and is required for establishment and maintenance of persistent infection in the host. Functions as a transcriptional regulator that recognizes a 19-bp nucleotide motif comprizing two loosely conserved 8-bp direct DNA-binding motif repeats separated by a 3-bp spacer region. The chain is Response regulator MprA (mprA) from Mycobacterium ulcerans (strain Agy99).